Here is a 954-residue protein sequence, read N- to C-terminus: MTTPTEFQFTDYQPYDFANRRHIGPSPAEMAEMLKVIGYNSLEGLIDATLPPAIRQKAPLVWGAPMTEREALDKLRETANKNKVLVSLIGQGYYGTITPPVIQRNILENPAWYTAYTPYQPEISQGRLEALLNYQTMVCDLTGLDIANASLLDEATAAAEGMAMAERVAKSKAKAFFVDADCHPQTIALIRTRAEPLGWSVIVGNPFTDLDPVDVFGAIFQYPGTHGHVHDFTGLIARLHQAGAISVVAADILALTLLKSPGEMGADIAVGSSQRFGVPVGYGGPHAAFMAVRDAIKRAMPGRLVGVSVDARGNRAYRLSLQTREQHIRREKATSNICTAQVLLAVMASMYAVFHGPDGIKAIAQQVHQKAVLMAKGLEKLGYKVEPESFFDTITVDVGHMQGLILRAAVAEGVNLRKVGETKIGMSLDERTRPATLEAVWRAFGGNFTIADFEPSYRLPKALLRTSEYLSHPIFHMNRAESEMTRYIRRLSDRDLALDRAMIPLGSCTMKLNATAEMLPITWPEFSDIHPFVPADQALGYREMLDDLTEKLCAVTGYDAFSMQPNSGAQGEYAGLLTIRNYHIANGEGHRDVCLIPTSAHGTNPASAQMVGMKVVVVKVRENGDIDMEDFRAKAEEHAANLSCCMITYPSTHGVFEETVKEICELVHKHGGQVYLDGANMNAMVGLSRPGDIGSDVSHLNLHKTFCIPHGGGGPGMGPIGVKAHLAPHLPGHPETDGRPGAVSAAPFGSASILPISWSYCLMMGGEGLTQATKVAILNANYIATRLKGAYNVLYKSKTGRVAHECIIDTRPLVDSSGVTVDDVAKRLIDCGFHAPTMSWPVAGTLMIEPTESETKAELDRFCEAMLAIREEARAIEDGRMDKTNNPLKNAPHTVEDLVGEWDRPYSREQACFPPGAFRVDKYWSPVNRVDNVYGDRNLICTCPPVESYAEAAE.

K704 bears the N6-(pyridoxal phosphate)lysine mark.

Belongs to the GcvP family. In terms of assembly, the glycine cleavage system is composed of four proteins: P, T, L and H. Pyridoxal 5'-phosphate is required as a cofactor.

The catalysed reaction is N(6)-[(R)-lipoyl]-L-lysyl-[glycine-cleavage complex H protein] + glycine + H(+) = N(6)-[(R)-S(8)-aminomethyldihydrolipoyl]-L-lysyl-[glycine-cleavage complex H protein] + CO2. The glycine cleavage system catalyzes the degradation of glycine. The P protein binds the alpha-amino group of glycine through its pyridoxal phosphate cofactor; CO(2) is released and the remaining methylamine moiety is then transferred to the lipoamide cofactor of the H protein. This chain is Glycine dehydrogenase (decarboxylating), found in Rhizobium etli (strain ATCC 51251 / DSM 11541 / JCM 21823 / NBRC 15573 / CFN 42).